The following is a 311-amino-acid chain: Ribonuclease HIII (311 aa).

The RNase H type-2 domain occupies 95–311 (MSIVGSDEVG…NTEKAFRLLK (217 aa)). Positions 101, 102, and 206 each coordinate a divalent metal cation.

The protein belongs to the RNase HII family. RnhC subfamily. It depends on Mn(2+) as a cofactor. Requires Mg(2+) as cofactor.

It localises to the cytoplasm. The enzyme catalyses Endonucleolytic cleavage to 5'-phosphomonoester.. In terms of biological role, endonuclease that specifically degrades the RNA of RNA-DNA hybrids. This chain is Ribonuclease HIII, found in Bacillus anthracis (strain A0248).